A 213-amino-acid chain; its full sequence is Glycerol-3-phosphate acyltransferase (213 aa).

6 consecutive transmembrane segments (helical) span residues 3-23 (ILLL…LWIG), 54-76 (TITF…WLGI), 83-100 (IIGF…FTGF), 110-130 (AGVL…VFAL), 142-162 (SITA…IHFL), and 163-183 (LDGY…VIIF).

It belongs to the PlsY family. As to quaternary structure, probably interacts with PlsX.

The protein localises to the cell membrane. It carries out the reaction an acyl phosphate + sn-glycerol 3-phosphate = a 1-acyl-sn-glycero-3-phosphate + phosphate. It functions in the pathway lipid metabolism; phospholipid metabolism. Catalyzes the transfer of an acyl group from acyl-phosphate (acyl-PO(4)) to glycerol-3-phosphate (G3P) to form lysophosphatidic acid (LPA). This enzyme utilizes acyl-phosphate as fatty acyl donor, but not acyl-CoA or acyl-ACP. The sequence is that of Glycerol-3-phosphate acyltransferase from Streptococcus thermophilus (strain ATCC BAA-491 / LMD-9).